The following is an 85-amino-acid chain: Small ribosomal subunit protein uS17 (85 aa).

The protein belongs to the universal ribosomal protein uS17 family. In terms of assembly, part of the 30S ribosomal subunit.

One of the primary rRNA binding proteins, it binds specifically to the 5'-end of 16S ribosomal RNA. This Desulfosudis oleivorans (strain DSM 6200 / JCM 39069 / Hxd3) (Desulfococcus oleovorans) protein is Small ribosomal subunit protein uS17.